We begin with the raw amino-acid sequence, 350 residues long: Cobalt-precorrin-5B C(1)-methyltransferase (350 aa).

It belongs to the CbiD family.

The catalysed reaction is Co-precorrin-5B + S-adenosyl-L-methionine = Co-precorrin-6A + S-adenosyl-L-homocysteine. Its pathway is cofactor biosynthesis; adenosylcobalamin biosynthesis; cob(II)yrinate a,c-diamide from sirohydrochlorin (anaerobic route): step 6/10. In terms of biological role, catalyzes the methylation of C-1 in cobalt-precorrin-5B to form cobalt-precorrin-6A. This is Cobalt-precorrin-5B C(1)-methyltransferase from Syntrophotalea carbinolica (strain DSM 2380 / NBRC 103641 / GraBd1) (Pelobacter carbinolicus).